A 195-amino-acid chain; its full sequence is Imidazoleglycerol-phosphate dehydratase (195 aa).

Belongs to the imidazoleglycerol-phosphate dehydratase family.

The protein resides in the cytoplasm. It carries out the reaction D-erythro-1-(imidazol-4-yl)glycerol 3-phosphate = 3-(imidazol-4-yl)-2-oxopropyl phosphate + H2O. Its pathway is amino-acid biosynthesis; L-histidine biosynthesis; L-histidine from 5-phospho-alpha-D-ribose 1-diphosphate: step 6/9. The sequence is that of Imidazoleglycerol-phosphate dehydratase from Burkholderia cenocepacia (strain ATCC BAA-245 / DSM 16553 / LMG 16656 / NCTC 13227 / J2315 / CF5610) (Burkholderia cepacia (strain J2315)).